The chain runs to 104 residues: Urease subunit beta (104 aa).

Belongs to the urease beta subunit family. Heterotrimer of UreA (gamma), UreB (beta) and UreC (alpha) subunits. Three heterotrimers associate to form the active enzyme.

Its subcellular location is the cytoplasm. The enzyme catalyses urea + 2 H2O + H(+) = hydrogencarbonate + 2 NH4(+). Its pathway is nitrogen metabolism; urea degradation; CO(2) and NH(3) from urea (urease route): step 1/1. The chain is Urease subunit beta from Rhodopseudomonas palustris (strain BisB18).